A 312-amino-acid chain; its full sequence is Phosphoribosylaminoimidazole-succinocarboxamide synthase (312 aa).

Belongs to the SAICAR synthetase family.

The catalysed reaction is 5-amino-1-(5-phospho-D-ribosyl)imidazole-4-carboxylate + L-aspartate + ATP = (2S)-2-[5-amino-1-(5-phospho-beta-D-ribosyl)imidazole-4-carboxamido]succinate + ADP + phosphate + 2 H(+). It participates in purine metabolism; IMP biosynthesis via de novo pathway; 5-amino-1-(5-phospho-D-ribosyl)imidazole-4-carboxamide from 5-amino-1-(5-phospho-D-ribosyl)imidazole-4-carboxylate: step 1/2. This chain is Phosphoribosylaminoimidazole-succinocarboxamide synthase, found in Legionella pneumophila (strain Paris).